A 359-amino-acid chain; its full sequence is 3-dehydroquinate synthase (359 aa).

Residues 72–77 (EGEIHK), 106–110 (GVIGD), 130–131 (TS), Lys143, Lys152, and 170–173 (CLKT) contribute to the NAD(+) site. 3 residues coordinate Zn(2+): Glu185, His248, and His264.

This sequence belongs to the sugar phosphate cyclases superfamily. Dehydroquinate synthase family. It depends on Co(2+) as a cofactor. Zn(2+) is required as a cofactor. The cofactor is NAD(+).

The protein resides in the cytoplasm. It catalyses the reaction 7-phospho-2-dehydro-3-deoxy-D-arabino-heptonate = 3-dehydroquinate + phosphate. It participates in metabolic intermediate biosynthesis; chorismate biosynthesis; chorismate from D-erythrose 4-phosphate and phosphoenolpyruvate: step 2/7. Functionally, catalyzes the conversion of 3-deoxy-D-arabino-heptulosonate 7-phosphate (DAHP) to dehydroquinate (DHQ). The chain is 3-dehydroquinate synthase from Dehalococcoides mccartyi (strain ATCC BAA-2100 / JCM 16839 / KCTC 5957 / BAV1).